A 169-amino-acid polypeptide reads, in one-letter code: Allophycocyanin subunit beta-18 (169 aa).

N4-methylasparagine is present on Asn-72. (2R,3E)-phycocyanobilin is bound at residue Cys-82.

It belongs to the phycobiliprotein family. As to quaternary structure, heterodimer of ApcE and this beta chain. Post-translationally, contains one covalently linked bilin chromophore.

It is found in the cellular thylakoid membrane. In terms of biological role, a variant beta-allophycocyanin (AP) which forms a complex with ApcE, a phycobilisome terminal emitter that influences energy transfer to photosystem II. This is Allophycocyanin subunit beta-18 (apcF) from Synechocystis sp. (strain ATCC 27184 / PCC 6803 / Kazusa).